Here is a 200-residue protein sequence, read N- to C-terminus: NAD(P)H dehydrogenase (quinone) (200 aa).

Residues 4-191 enclose the Flavodoxin-like domain; it reads VLVLYYSSYG…DIARYQGKHV (188 aa). Residues 10-15 and 79-81 contribute to the FMN site; these read SSYGHV and TRF. Tyr12 is a binding site for NAD(+). A substrate-binding site is contributed by Trp99. FMN contacts are provided by residues 114–120 and His135; that span reads STGTQHG.

It belongs to the WrbA family. Requires FMN as cofactor.

It catalyses the reaction a quinone + NADH + H(+) = a quinol + NAD(+). The catalysed reaction is a quinone + NADPH + H(+) = a quinol + NADP(+). The protein is NAD(P)H dehydrogenase (quinone) of Burkholderia multivorans (strain ATCC 17616 / 249).